Reading from the N-terminus, the 21-residue chain is S-layer protein 2 (21 aa).

Its subcellular location is the secreted. The protein localises to the cell wall. It localises to the S-layer. In terms of biological role, the S-layer is a paracrystalline mono-layered assembly of proteins which coat the surface of bacteria. This is S-layer protein 2 from Bacillus thuringiensis subsp. konkukian.